The sequence spans 108 residues: Gibberellin-regulated protein 7 (108 aa).

Positions 1–23 are cleaved as a signal peptide; sequence MKIIVSILVLASLLLISSSLASA.

The protein belongs to the GASA family. Post-translationally, six disulfide bonds may be present.

The protein resides in the secreted. In terms of biological role, gibberellin-regulated protein that may function in hormonal controlled steps of development such as seed germination, flowering and seed maturation. In Arabidopsis thaliana (Mouse-ear cress), this protein is Gibberellin-regulated protein 7 (GASA7).